We begin with the raw amino-acid sequence, 247 residues long: MAGHSKWANTKHRKAAQDAKRGKIFTKIIRELVTAARLGGGDPGANPRLRAAIDKALSNNMTRDTLNRAIARGVGGDEDNNMETIIYEGYGPGGTAVMVECLSDNRNRTVSEVRHAFTKTGGNLGTDGSVSYLFTKKGVISYAPGLEEDTVMDAALEAGADDIVVYDDGAIDVFTAWESLGAVKDALDATGLVAEGAEVSLIPSTKAELDAETAPKLLRLIDMLEDSDDVQEVYHNGEISDEVAATL.

Belongs to the TACO1 family.

It is found in the cytoplasm. This chain is Probable transcriptional regulatory protein YPO2055/y2255/YP_1898, found in Yersinia pestis.